The primary structure comprises 293 residues: MWSVMGLVRRTAMSSTVNKASPVRSLLGGFRCLNVESKEEDEKKDMTVLEAKKLMRLVNVEDMKKKLIGMGDKEMVTYTTLIEASQGLGIARSLDEAHAFARVLDDAGVILIFRDKVYLHPHKVVDLIRKAVPLGLNPDDELIREEFDKMRSMKEEIDVLAHQQVRKILWGGLGYSVVQIGIFVRLTFWEFSWDVMEPITFFTTATGIIVGYAYFLMTSRDPTYQDFMKRLFLSRQRKLLKSHKFDAERFKELENKWKITSCSSSSCHANASIRNRVGVDLDLEDSLQSHHRD.

The transit peptide at 1 to 33 (MWSVMGLVRRTAMSSTVNKASPVRSLLGGFRCL) directs the protein to the mitochondrion. The chain crosses the membrane as a helical span at residues 168–188 (ILWGGLGYSVVQIGIFVRLTF). A Selectivity filter motif is present at residues 193–201 (WDVMEPITF). Glu197 contacts Ca(2+). Residues 198-218 (PITFFTTATGIIVGYAYFLMT) form a helical membrane-spanning segment.

The protein belongs to the MCU (TC 1.A.77) family.

It is found in the mitochondrion inner membrane. The catalysed reaction is Ca(2+)(in) = Ca(2+)(out). Its function is as follows. Mitochondrial inner membrane calcium uniporter that mediates calcium uptake into mitochondria. Constitutes a pore-forming and calcium-conducting subunit. Mitochondrial calcium homeostasis plays key roles in cellular physiology and regulates cell bioenergetics, cytoplasmic calcium signals and activation of cell death pathways. The polypeptide is Calcium uniporter protein 2, mitochondrial (Arabidopsis thaliana (Mouse-ear cress)).